Here is a 523-residue protein sequence, read N- to C-terminus: ATP synthase subunit alpha (523 aa).

ATP is bound at residue 173-180; sequence GDRQTGKT.

The protein belongs to the ATPase alpha/beta chains family. F-type ATPases have 2 components, CF(1) - the catalytic core - and CF(0) - the membrane proton channel. CF(1) has five subunits: alpha(3), beta(3), gamma(1), delta(1), epsilon(1). CF(0) has three main subunits: a(1), b(2) and c(9-12). The alpha and beta chains form an alternating ring which encloses part of the gamma chain. CF(1) is attached to CF(0) by a central stalk formed by the gamma and epsilon chains, while a peripheral stalk is formed by the delta and b chains.

Its subcellular location is the cell membrane. The catalysed reaction is ATP + H2O + 4 H(+)(in) = ADP + phosphate + 5 H(+)(out). Produces ATP from ADP in the presence of a proton gradient across the membrane. The alpha chain is a regulatory subunit. This chain is ATP synthase subunit alpha, found in Streptomyces griseus subsp. griseus (strain JCM 4626 / CBS 651.72 / NBRC 13350 / KCC S-0626 / ISP 5235).